The chain runs to 331 residues: Pantothenate kinase (331 aa).

An ATP-binding site is contributed by 109-116; sequence GSVAVGKS.

The protein belongs to the prokaryotic pantothenate kinase family.

The protein localises to the cytoplasm. It carries out the reaction (R)-pantothenate + ATP = (R)-4'-phosphopantothenate + ADP + H(+). Its pathway is cofactor biosynthesis; coenzyme A biosynthesis; CoA from (R)-pantothenate: step 1/5. This chain is Pantothenate kinase, found in Rhizobium meliloti (strain 1021) (Ensifer meliloti).